The sequence spans 106 residues: Large ribosomal subunit protein eL42 (106 aa).

The tract at residues 36–56 (FAQGKRRYDRKQSGYGGQTKP) is disordered.

Belongs to the eukaryotic ribosomal protein eL42 family.

In Coprinopsis cinerea (strain Okayama-7 / 130 / ATCC MYA-4618 / FGSC 9003) (Inky cap fungus), this protein is Large ribosomal subunit protein eL42 (RPL44).